The sequence spans 371 residues: Anhydro-N-acetylmuramic acid kinase (371 aa).

12–20 (GTVLDGNID) contacts ATP.

It belongs to the anhydro-N-acetylmuramic acid kinase family.

The enzyme catalyses 1,6-anhydro-N-acetyl-beta-muramate + ATP + H2O = N-acetyl-D-muramate 6-phosphate + ADP + H(+). It functions in the pathway amino-sugar metabolism; 1,6-anhydro-N-acetylmuramate degradation. Its pathway is cell wall biogenesis; peptidoglycan recycling. Its function is as follows. Catalyzes the specific phosphorylation of 1,6-anhydro-N-acetylmuramic acid (anhMurNAc) with the simultaneous cleavage of the 1,6-anhydro ring, generating MurNAc-6-P. Is required for the utilization of anhMurNAc either imported from the medium or derived from its own cell wall murein, and thus plays a role in cell wall recycling. This is Anhydro-N-acetylmuramic acid kinase from Brucella anthropi (strain ATCC 49188 / DSM 6882 / CCUG 24695 / JCM 21032 / LMG 3331 / NBRC 15819 / NCTC 12168 / Alc 37) (Ochrobactrum anthropi).